Reading from the N-terminus, the 144-residue chain is Androgenic gland hormone (144 aa).

An N-terminal signal peptide occupies residues Met-1–Ala-21. Intrachain disulfides connect Cys-33/Cys-123, Cys-42/Cys-59, Cys-44/Cys-141, and Cys-124/Cys-132. Residues Ser-68–Gly-113 constitute a propeptide, c peptide. An N-linked (GlcNAc...) (complex) asparagine glycan is attached at Asn-133.

In terms of tissue distribution, androgenic gland.

The protein resides in the secreted. Functionally, controls sex differentiation and the formation of male appendages, spermatogenesis, pigmentation, and male specific behavior. The protein is Androgenic gland hormone of Armadillidium vulgare (Pillbug).